A 210-amino-acid chain; its full sequence is Glutathione S-transferase P 2 (210 aa).

In terms of domain architecture, GST N-terminal spans 1–82; sequence SGYTLTYFPL…LLARYGLSGS (82 aa). Glutathione-binding positions include Y7, R13, W38, K46, 53 to 54, and 66 to 67; these read QI and QS. The GST C-terminal domain maps to 83–204; it reads NEREIAINEM…KSEGRKRRPI (122 aa).

The protein belongs to the GST superfamily. Pi family. Homodimer. In terms of tissue distribution, liver, kidney, muscle, skin, lung and ovary.

It carries out the reaction RX + glutathione = an S-substituted glutathione + a halide anion + H(+). Its function is as follows. Conjugation of reduced glutathione to a wide number of exogenous and endogenous hydrophobic electrophiles. This chain is Glutathione S-transferase P 2, found in Bufo bufo (European toad).